A 369-amino-acid chain; its full sequence is Leucine-specific-binding protein (369 aa).

A signal peptide spans 1-23 (MKRKAKTIIAGIVALAVSQGAMA). A disulfide bond links Cys76 and Cys101.

Belongs to the leucine-binding protein family.

The protein resides in the periplasm. Functionally, this protein is a component of the leucine-specific transport system, which is one of the two periplasmic binding protein-dependent transport systems of the high-affinity transport of the branched-chain amino acids. The protein is Leucine-specific-binding protein (livK) of Salmonella typhi.